Here is a 129-residue protein sequence, read N- to C-terminus: Large ribosomal subunit protein eL32 (129 aa).

This sequence belongs to the eukaryotic ribosomal protein eL32 family.

This is Large ribosomal subunit protein eL32 (rpl32e) from Methanosarcina mazei (strain ATCC BAA-159 / DSM 3647 / Goe1 / Go1 / JCM 11833 / OCM 88) (Methanosarcina frisia).